The sequence spans 378 residues: Serpin B6 (378 aa).

Met-1 bears the N-acetylmethionine mark. The residue at position 196 (Lys-196) is an N6-acetyllysine.

Belongs to the serpin family. Ov-serpin subfamily. Forms a complex with the monomeric form of beta-tryptase. As to expression, brain.

Its subcellular location is the cytoplasm. Functionally, inhibitor of cathepsin G, kallikrein-8 and thrombin. May play an important role in the inner ear in the protection against leakage of lysosomal content during stress. May be involved in the regulation of serine proteinases present in the brain or extravasated from the blood. This is Serpin B6 (SERPINB6) from Bos taurus (Bovine).